The following is a 481-amino-acid chain: Glucan endo-1,3-beta-glucosidase 8 (481 aa).

A signal peptide spans 1-33; the sequence is MSNLLALVVGFVIVIGHLGILVNGLGVNWGTMA. N-linked (GlcNAc...) asparagine glycans are attached at residues asparagine 99 and asparagine 110. Glutamate 119 serves as the catalytic Proton donor. Asparagine 126 and asparagine 131 each carry an N-linked (GlcNAc...) asparagine glycan. Glutamate 265 functions as the Nucleophile in the catalytic mechanism. An intrachain disulfide couples cysteine 367 to cysteine 428. 2 N-linked (GlcNAc...) asparagine glycosylation sites follow: asparagine 409 and asparagine 440. The GPI-anchor amidated serine moiety is linked to residue serine 455. Residues 456–481 constitute a propeptide, removed in mature form; it reads SASSFSCSSYSLVVLIVWFLLSGMMF.

Belongs to the glycosyl hydrolase 17 family. Contains two additional disulfide bonds.

Its subcellular location is the secreted. The protein localises to the cell wall. The protein resides in the cell membrane. The enzyme catalyses Hydrolysis of (1-&gt;3)-beta-D-glucosidic linkages in (1-&gt;3)-beta-D-glucans.. In Arabidopsis thaliana (Mouse-ear cress), this protein is Glucan endo-1,3-beta-glucosidase 8.